The primary structure comprises 364 residues: GTPase Obg (364 aa).

Positions 1–161 constitute an Obg domain; the sequence is MRFVDEVTIS…KYLRLELKIL (161 aa). Positions 162-334 constitute an OBG-type G domain; sequence ADAGIIGLPN…LVDAIWKLQS (173 aa). GTP contacts are provided by residues 168-175, 193-197, 217-220, 287-290, and 315-317; these read GLPNAGKS, FTTLN, DIPG, NKID, and SAE. Residues S175 and T195 each coordinate Mg(2+).

This sequence belongs to the TRAFAC class OBG-HflX-like GTPase superfamily. OBG GTPase family. As to quaternary structure, monomer. Requires Mg(2+) as cofactor.

The protein localises to the cytoplasm. Functionally, an essential GTPase which binds GTP, GDP and possibly (p)ppGpp with moderate affinity, with high nucleotide exchange rates and a fairly low GTP hydrolysis rate. Plays a role in control of the cell cycle, stress response, ribosome biogenesis and in those bacteria that undergo differentiation, in morphogenesis control. This chain is GTPase Obg, found in Lawsonia intracellularis (strain PHE/MN1-00).